The primary structure comprises 354 residues: Methylthioribose-1-phosphate isomerase (354 aa).

Substrate-binding positions include 58–60 (RGA), arginine 101, and glutamine 204. Residue aspartate 245 is the Proton donor of the active site. Position 255-256 (255-256 (NK)) interacts with substrate.

Belongs to the eIF-2B alpha/beta/delta subunits family. MtnA subfamily.

It catalyses the reaction 5-(methylsulfanyl)-alpha-D-ribose 1-phosphate = 5-(methylsulfanyl)-D-ribulose 1-phosphate. The protein operates within amino-acid biosynthesis; L-methionine biosynthesis via salvage pathway; L-methionine from S-methyl-5-thio-alpha-D-ribose 1-phosphate: step 1/6. Functionally, catalyzes the interconversion of methylthioribose-1-phosphate (MTR-1-P) into methylthioribulose-1-phosphate (MTRu-1-P). This Xylella fastidiosa (strain 9a5c) protein is Methylthioribose-1-phosphate isomerase.